The primary structure comprises 626 residues: tRNA uridine 5-carboxymethylaminomethyl modification enzyme MnmG (626 aa).

An FAD-binding site is contributed by Gly13–Gly18. An NAD(+)-binding site is contributed by Gly273–Phe287.

The protein belongs to the MnmG family. In terms of assembly, homodimer. Heterotetramer of two MnmE and two MnmG subunits. FAD serves as cofactor.

Its subcellular location is the cytoplasm. NAD-binding protein involved in the addition of a carboxymethylaminomethyl (cmnm) group at the wobble position (U34) of certain tRNAs, forming tRNA-cmnm(5)s(2)U34. This Acinetobacter baylyi (strain ATCC 33305 / BD413 / ADP1) protein is tRNA uridine 5-carboxymethylaminomethyl modification enzyme MnmG.